The primary structure comprises 382 residues: Membrane protein MLC1 (382 aa).

Over residues Met-1–Arg-28 the composition is skewed to basic and acidic residues. The tract at residues Met-1–Leu-43 is disordered. 4 helical membrane-spanning segments follow: residues Trp-58–Leu-78, Tyr-88–Gly-107, Phe-117–Cys-137, and Ile-148–Ile-168. Phosphoserine occurs at positions 183, 185, and 188. Helical transmembrane passes span Ser-205 to Val-225, Leu-234 to Val-254, Leu-263 to Gly-283, and Leu-309 to Ile-329.

Interacts with ATP1B1. Part of a complex containing ATP1B1, TRPV4, AQP4 and HEPACAM.

The protein resides in the membrane. It is found in the cell membrane. It localises to the cytoplasm. Its subcellular location is the perinuclear region. The protein localises to the endoplasmic reticulum. Functionally, transmembrane protein mainly expressed in brain astrocytes that may play a role in transport across the blood-brain and brain-cerebrospinal fluid barriers. Regulates the response of astrocytes to hypo-osmosis by promoting calcium influx. May function as regulatory protein of membrane protein complexes such as ion channels. The sequence is that of Membrane protein MLC1 from Mus musculus (Mouse).